Consider the following 434-residue polypeptide: MNIQTDVLIIGTGVAGLYSALSLKNDIKVTMLTKSKACECNTYLAQGGISTALNKKDEPLFVDDTLRAGQYRNIKESVKILAAESKQNIDTLINFGMKFDKNEDGSLNYTREGAHSVNRIVHSTDETGKVVFETLYNEVKKRPNIEIIENIQVFDLISEDNICFGASALKNNTIYTFHSKATILASGGIGGLFKNSTNQRTLTADGIAMALRHNIDVRDLNYIQFHPTALYDSNTQEKKFLISESVRGEGGKLLSIENERFVDELLPRDVVANAIYKEEEKDNSKYVYLDITSMDADFITKRFPGIYKECLSRGLDITKNKIPVTPVQHYFMGGIKVDFNSLTSMKNLYACGEVSSTGVHGANRLASNSLLEGLVFSKRAAENINHSISFIERNEKNENLTLSDALSIIKCNRNIVINKFESILGEKKNELVNI.

FAD contacts are provided by residues 12–15 (TGVA), K34, 41–48 (NTYLAQGG), and D205. R268 functions as the Proton donor/acceptor in the catalytic mechanism. Residues E353 and 369–370 (SL) each bind FAD.

Belongs to the FAD-dependent oxidoreductase 2 family. NadB subfamily. The cofactor is FAD.

The protein resides in the cytoplasm. The enzyme catalyses L-aspartate + O2 = iminosuccinate + H2O2. It functions in the pathway cofactor biosynthesis; NAD(+) biosynthesis; iminoaspartate from L-aspartate (oxidase route): step 1/1. Catalyzes the oxidation of L-aspartate to iminoaspartate, the first step in the de novo biosynthesis of NAD(+). The sequence is that of L-aspartate oxidase (nadB) from Clostridium acetobutylicum (strain ATCC 824 / DSM 792 / JCM 1419 / IAM 19013 / LMG 5710 / NBRC 13948 / NRRL B-527 / VKM B-1787 / 2291 / W).